The chain runs to 415 residues: tRNA(Ile)-lysidine synthase (415 aa).

An ATP-binding site is contributed by 36–41 (SGGRDS).

This sequence belongs to the tRNA(Ile)-lysidine synthase family.

It is found in the cytoplasm. The enzyme catalyses cytidine(34) in tRNA(Ile2) + L-lysine + ATP = lysidine(34) in tRNA(Ile2) + AMP + diphosphate + H(+). Ligates lysine onto the cytidine present at position 34 of the AUA codon-specific tRNA(Ile) that contains the anticodon CAU, in an ATP-dependent manner. Cytidine is converted to lysidine, thus changing the amino acid specificity of the tRNA from methionine to isoleucine. The polypeptide is tRNA(Ile)-lysidine synthase (Tropheryma whipplei (strain Twist) (Whipple's bacillus)).